The sequence spans 309 residues: Ribonuclease Z (309 aa).

Zn(2+) is bound by residues histidine 63, histidine 65, aspartate 67, histidine 68, histidine 145, aspartate 216, and histidine 274. Residue aspartate 67 is the Proton acceptor of the active site.

The protein belongs to the RNase Z family. Homodimer. Zn(2+) serves as cofactor.

It catalyses the reaction Endonucleolytic cleavage of RNA, removing extra 3' nucleotides from tRNA precursor, generating 3' termini of tRNAs. A 3'-hydroxy group is left at the tRNA terminus and a 5'-phosphoryl group is left at the trailer molecule.. Its function is as follows. Zinc phosphodiesterase, which displays some tRNA 3'-processing endonuclease activity. Probably involved in tRNA maturation, by removing a 3'-trailer from precursor tRNA. The sequence is that of Ribonuclease Z from Streptococcus mutans serotype c (strain ATCC 700610 / UA159).